Reading from the N-terminus, the 298-residue chain is tRNA pseudouridine synthase B (298 aa).

The active-site Nucleophile is D45.

It belongs to the pseudouridine synthase TruB family. Type 1 subfamily.

It catalyses the reaction uridine(55) in tRNA = pseudouridine(55) in tRNA. Responsible for synthesis of pseudouridine from uracil-55 in the psi GC loop of transfer RNAs. The protein is tRNA pseudouridine synthase B of Thiobacillus denitrificans (strain ATCC 25259 / T1).